Here is a 667-residue protein sequence, read N- to C-terminus: Probable oxidoreductase YyaE (667 aa).

Residues 2-59 enclose the 4Fe-4S Mo/W bis-MGD-type domain; it reads SKVHQSACPLNCWDSCGFLVTVDDGKVTKVDGDPNHPITEGKICGRGRMLETKTNSPD. 4 residues coordinate [4Fe-4S] cluster: Cys9, Cys13, Cys17, and Cys45.

It belongs to the prokaryotic molybdopterin-containing oxidoreductase family. Requires Mo-bis(molybdopterin guanine dinucleotide) as cofactor.

In Bacillus subtilis (strain 168), this protein is Probable oxidoreductase YyaE (yyaE).